A 455-amino-acid polypeptide reads, in one-letter code: Venom prothrombin activator notecarin-D1 (455 aa).

An N-terminal signal peptide occupies residues 1-20 (MAPQLLLCLILTFLWSLPEA). A propeptide spanning residues 21–40 (ESNVFLKSKVANRFLQRTKR) is cleaved from the precursor. The 46-residue stretch at 41 to 86 (SNSLFEEIRPGNIERECIEEKCSKEEAREVFEDNEKTETFWNVYVD) folds into the Gla domain. Residues Glu46, Glu47, Glu54, Glu56, Glu59, Glu60, Glu65, Glu66, Glu69, Glu72, and Glu75 each carry the 4-carboxyglutamate modification. A disulfide bridge connects residues Cys57 and Cys62. One can recognise an EGF-like 1; calcium-binding domain in the interval 86–122 (DGDQCSSNPCHYRGTCKDGIGSYTCTCLPNYEGKNCE). 11 cysteine pairs are disulfide-bonded: Cys90–Cys101, Cys95–Cys110, Cys112–Cys121, Cys129–Cys140, Cys136–Cys149, Cys151–Cys164, Cys172–Cys328, Cys216–Cys221, Cys236–Cys252, Cys376–Cys390, and Cys401–Cys429. Ser92 carries O-linked (Hex...) serine glycosylation. The region spanning 129–164 (CRVDNGNCWHFCKRVQSETQCSCAESYRLGVDGHSC) is the EGF-like 2 domain. Positions 182 to 209 (REASLPDFVQSQKATLLKKSDNPSPDIR) are cleaved as a propeptide — activation peptide. Positions 210–453 (IVNGMDCKLG…FIPWIKKIMS (244 aa)) constitute a Peptidase S1 domain. The active-site Charge relay system is His251. Asn254 carries an N-linked (GlcNAc...) asparagine glycan. Asp308 serves as the catalytic Charge relay system. The Charge relay system role is filled by Ser405.

This sequence belongs to the peptidase S1 family. Snake venom subfamily. Heterodimer of a light chain and a heavy chain; disulfide-linked. Post-translationally, gamma-carboxyglutamate residues are formed by vitamin K dependent carboxylation. These residues are essential for the binding of calcium. Expressed by the venom gland.

It localises to the secreted. The catalysed reaction is Selective cleavage of Arg-|-Thr and then Arg-|-Ile bonds in prothrombin to form thrombin.. Functionally, snake prothrombin activator that attacks the hemostatic system of prey. This protein is functionally similar to blood coagulation factor Xa. The protein is Venom prothrombin activator notecarin-D1 of Notechis scutatus scutatus (Mainland tiger snake).